Reading from the N-terminus, the 471-residue chain is MATGKILQITGVVIDAEFPADGLPQIYNALEIPLGEGRSSLICEVQQQLGDSVVRAVAMSTTDGLVRGMDVIDTGAPISVPVGPETLGRVFDVQGRPIDGEGAVGTTKTMPIHRPAPTFEEQSNRAELFETGIKVIDLIAPFTKGGKTGVFGGAGVGKTVIIQELISNIAKEQSGYSVFAGVGERSREGNDLIHEMKDSKIPGTDQTVFDKTVMVFGQMNEPPGARLRVALSALTMAEYFREEGRDVLLFVDNIFRFTQAGSEVSALLGRMPSQVGYQPTLGTEMGELQERITSTKTGSITSLQAVYVPADDYTDPAPATTFAHLDATISLERSISEKGIYPAVDPLASTSRILDPNIVGEEHYRVATEVQRMLQRYKDLQDIIAILGVEELSDDDKLTVSRARKLERFFSQPFGVAEVFTNIPGKYVAVGDTVKSFARVLAGEFDHIPESFFFMKGGIDDVVAAYDASKQ.

152 to 159 serves as a coordination point for ATP; sequence GGAGVGKT.

Belongs to the ATPase alpha/beta chains family. As to quaternary structure, F-type ATPases have 2 components, CF(1) - the catalytic core - and CF(0) - the membrane proton channel. CF(1) has five subunits: alpha(3), beta(3), gamma(1), delta(1), epsilon(1). CF(0) has three main subunits: a(1), b(2) and c(9-12). The alpha and beta chains form an alternating ring which encloses part of the gamma chain. CF(1) is attached to CF(0) by a central stalk formed by the gamma and epsilon chains, while a peripheral stalk is formed by the delta and b chains.

Its subcellular location is the cell membrane. It carries out the reaction ATP + H2O + 4 H(+)(in) = ADP + phosphate + 5 H(+)(out). In terms of biological role, produces ATP from ADP in the presence of a proton gradient across the membrane. The catalytic sites are hosted primarily by the beta subunits. This chain is ATP synthase subunit beta, found in Herpetosiphon aurantiacus (strain ATCC 23779 / DSM 785 / 114-95).